The sequence spans 321 residues: MAVYTDVAPAELEAFLSGYDIGTLTSFHGIAEGVENSNFLVQTTRGSYILTLYEKRVNRDDLPFFIGLMEHLAARGLSCPQPVAQRSGAVLSEIAGRPAAMVTFLPGVSVRRPTAEHCAELGRGLAQLHLAGADFAMRRANNLSVAGWRPLFVAADGQADDVAPGLADAIAAELATLEANWPQGLPAGVIHADLFPDNAFFLDEKLSGIIDFYFACTDFLAYDVAVCLNAWCFEPDGSYNVTKGRALLSGYEAVRPLSGAEKAALPRLARGAALRFLLTRLVDWLNVPEGALVRPKDPLEYLKKLRFHQAVDSAQDYGLAA.

Belongs to the pseudomonas-type ThrB family.

It catalyses the reaction L-homoserine + ATP = O-phospho-L-homoserine + ADP + H(+). It functions in the pathway amino-acid biosynthesis; L-threonine biosynthesis; L-threonine from L-aspartate: step 4/5. The polypeptide is Homoserine kinase (Xanthobacter autotrophicus (strain ATCC BAA-1158 / Py2)).